The chain runs to 402 residues: Multidrug resistance protein MdtH (402 aa).

Over 1–12 the chain is Cytoplasmic; that stretch reads MSRVSQARNLGK. Residues 13–33 form a helical membrane-spanning segment; the sequence is YFLLIDNMLVVLGFFVVFPLI. Residues 34–98 are Periplasmic-facing; it reads SIRFVDQMGW…GFATMGIAHE (65 aa). The chain crosses the membrane as a helical span at residues 99–116; it reads PWLLWFSCFLSGLGGTLF. The Cytoplasmic segment spans residues 117–138; it reads DPPRSALVVKLIRPEQRGRFFS. Residues 139 to 159 form a helical membrane-spanning segment; it reads LLMMQDSAGAVIGALLGSWLL. Residues 160-164 lie on the Periplasmic side of the membrane; it reads QYDFR. Residues 165-185 form a helical membrane-spanning segment; it reads LVCATGAILFILCALFNAWLL. At 186–213 the chain is on the cytoplasmic side; the sequence is PAWKLSTVRTPVREGMRRVMSDKRFVTY. Residues 214–234 traverse the membrane as a helical segment; that stretch reads VLTLAGYYMLAVQVMLMLPIM. At 235–243 the chain is on the periplasmic side; that stretch reads VNDIAGSPA. Residues 244–264 form a helical membrane-spanning segment; that stretch reads AVKWMYAIEACLSLTLLYPIA. At 265–276 the chain is on the cytoplasmic side; sequence RWSEKRFRLEHR. Residues 277 to 297 form a helical membrane-spanning segment; the sequence is LMAGLLVMSLSMIPIGMVGNL. Over 298 to 299 the chain is Periplasmic; the sequence is QQ. A helical transmembrane segment spans residues 300–320; that stretch reads LFTLICAFYIGSVIAEPARET. The Cytoplasmic portion of the chain corresponds to 321-339; the sequence is LSASLADARARGSYMGFSR. The chain crosses the membrane as a helical span at residues 340–360; the sequence is LGLAIGGAIGYIGGGWLFDMG. Topologically, residues 361 to 367 are periplasmic; sequence KALTQPE. A helical membrane pass occupies residues 368-388; it reads LPWMMLGIIGFITFLALGWQF. At 389–402 the chain is on the cytoplasmic side; that stretch reads SHKRTPRRMLEPGA.

It belongs to the major facilitator superfamily. DHA1 family. MdtH (TC 2.A.1.2.21) subfamily.

The protein resides in the cell inner membrane. The chain is Multidrug resistance protein MdtH from Salmonella paratyphi B (strain ATCC BAA-1250 / SPB7).